The following is a 56-amino-acid chain: Large ribosomal subunit protein bL32 (56 aa).

Residues 1 to 37 are disordered; it reads MAVQQNKKSRSRRDMRRSHDALTTAAVSVDKASGETH. Positions 7 to 16 are enriched in basic residues; that stretch reads KKSRSRRDMR.

The protein belongs to the bacterial ribosomal protein bL32 family.

The polypeptide is Large ribosomal subunit protein bL32 (Haemophilus influenzae (strain PittEE)).